The sequence spans 1242 residues: Insulin receptor substrate 1 (1242 aa).

A Phosphoserine modification is found at Ser3. The interval 3–137 (SPPESDGFSD…GAGGGGGSCS (135 aa)) is mediates interaction with PHIP. A PH domain is found at 12-115 (DVRKVGYLRK…WYQALLQLHN (104 aa)). Position 99 is a phosphoserine; by CK2 (Ser99). An IRS-type PTB domain is found at 160 to 264 (FKEVWQVILK…EAMRAMSDEF (105 aa)). The tract at residues 262–430 (DEFRPRSKSQ…SDGGFISSDE (169 aa)) is disordered. Residues 269–281 (KSQSSSNCSNPIS) show a composition bias toward low complexity. Ser270 and Ser307 each carry phosphoserine; by RPS6KB1. Ser312 carries the phosphoserine; by IKKB, MAPK8 and RPS6KB1 modification. A phosphoserine mark is found at Ser315, Ser323, Ser330, Ser345, and Ser348. The segment covering 354–363 (THAHRHRGSA) has biased composition (basic residues). Composition is skewed to low complexity over residues 383-404 (SPSA…GSTS) and 412-424 (SSAS…SDGG). Ser419 is modified (phosphoserine). Thr446 and Thr453 each carry phosphothreonine. Position 465 is a phosphotyrosine; by INSR (Tyr465). A YXXM motif 1 motif is present at residues 465–468 (YICM). The residue at position 527 (Ser527) is a Phosphoserine; by RPS6KB1. Residues 551-554 (YTEM) carry the YXXM motif 2 motif. Basic and acidic residues predominate over residues 592–610 (LERRGGHHRPDSSTLHTDD). Positions 592–616 (LERRGGHHRPDSSTLHTDDGYMPMS) are disordered. Position 612 is a phosphotyrosine; by INSR (Tyr612). The YXXM motif 3 signature appears at 612–615 (YMPM). Phosphoserine occurs at positions 616 and 629. Phosphotyrosine; by INSR is present on Tyr632. The YXXM motif 4 motif lies at 632 to 635 (YMPM). Position 636 is a phosphoserine; by RPS6KB1 (Ser636). A Phosphotyrosine modification is found at Tyr662. Residues 662 to 665 (YMMM) carry the YXXM motif 5 motif. The interval 668–693 (SGGCSPDIGGGPSSSSSSSNAVPSGT) is disordered. The short motif at 732 to 735 (YMNM) is the YXXM motif 6 element. 2 disordered regions span residues 771-900 (FKHT…VNIE) and 918-937 (SPSV…EETG). Basic and acidic residues predominate over residues 776–785 (RPGEPEEGAR). Ser794 is modified (phosphoserine; by AMPK and SIK2). The span at 801-815 (AATADDSSSSTSSDS) shows a compositional bias: low complexity. At Ser892 the chain carries Phosphoserine. Residue Tyr896 is modified to Phosphotyrosine; by INSR. Residues 896–898 (YVN) are GRB2-binding. Over residues 918–928 (SPSVRCPSQLQ) the composition is skewed to polar residues. 2 positions are modified to phosphotyrosine; by INSR: Tyr941 and Tyr989. 3 consecutive short sequence motifs (YXXM motif) follow at residues 941-944 (YMKM), 989-992 (YMTM), and 1012-1015 (YADM). The tract at residues 1057 to 1146 (SSLLGGPQGP…DVKRHSSASF (90 aa)) is disordered. Residues 1073–1085 (TRVNLSPNRNQSA) show a composition bias toward polar residues. Ser1100 is modified (phosphoserine). The residue at position 1101 (Ser1101) is a Phosphoserine; by RPS6KB1 and PKC/PRKCQ. The segment covering 1102 to 1114 (ETFSSTPSATRVG) has biased composition (polar residues). The residue at position 1179 (Tyr1179) is a Phosphotyrosine; by INSR. Residues Lys1186 and Lys1189 each participate in a glycyl lysine isopeptide (Lys-Gly) (interchain with G-Cter in ubiquitin) cross-link. The interval 1190–1242 (QCPQECTPEPQPPPPPPPHQPLGSGESSSTRRSSEDLSAYASISFQKQPEDRQ) is disordered. Positions 1198–1209 (EPQPPPPPPPHQ) are enriched in pro residues. Low complexity predominate over residues 1210–1220 (PLGSGESSSTR). Position 1229 is a phosphotyrosine; by INSR (Tyr1229).

In terms of assembly, interacts with UBTF and PIK3CA. Interacts (via phosphorylated YXXM motifs) with PIK3R1. Interacts with ROCK1 and FER. Interacts (via PH domain) with PHIP. Interacts with GRB2. Interacts with SOCS7. Interacts (via IRS-type PTB domain) with IGF1R and INSR (via the tyrosine-phosphorylated NPXY motif). Interacts with ALK. Interacts with EIF2AK2/PKR. Interacts with GKAP1. Interacts with DGKZ in the absence of insulin; insulin stimulation decreases this interaction. Found in a ternary complex with DGKZ and PIP5K1A in the absence of insulin stimulation. Interacts with SQSTM1; the interaction is disrupted by the presence of tensin TNS2. Interacts with NCK1 (via SH2 domain). Interacts with NCK2 (via SH3 domain). Interacts with SH2B1; this interaction enhances leptin-induced activation of the PI3-kinase pathway. Interacts with DVL2; this interaction promotes the Wnt/beta-catenin signaling pathway. In terms of processing, serine phosphorylation of IRS1 is a mechanism for insulin resistance. Ser-307, Ser-312, Ser-315, and Ser-323 phosphorylations inhibit insulin action through disruption of IRS1 interaction with the insulin receptor INSR. Phosphorylation of Tyr-896 is required for GRB2-binding. Phosphorylated by ALK. Phosphorylated at Ser-270, Ser-307, Ser-636 and Ser-1101 by RPS6KB1; phosphorylation induces accelerated degradation of IRS1. Phosphorylated on tyrosine residues in response to insulin. In skeletal muscles, dephosphorylated on Tyr-612 by TNS2 under anabolic conditions; dephosphorylation results in the proteasomal degradation of IRS1. Ubiquitinated by the Cul7-RING(FBXW8) complex in a mTOR-dependent manner, leading to its degradation: the Cul7-RING(FBXW8) complex recognizes and binds IRS1 previously phosphorylated by S6 kinase (RPS6KB1 or RPS6KB2). Ubiquitinated by TRAF4 through 'Lys-29' linkage; this ubiquitination regulates the interaction of IRS1 with IGFR and IRS1 tyrosine phosphorylation upon IGF1 stimulation. Post-translationally, S-nitrosylation at by BLVRB inhibits its activity.

Its subcellular location is the cytoplasm. It localises to the nucleus. Signaling adapter protein that participates in the signal transduction from two prominent receptor tyrosine kinases, insulin receptor/INSR and insulin-like growth factor I receptor/IGF1R. Plays therefore an important role in development, growth, glucose homeostasis as well as lipid metabolism. Upon phosphorylation by the insulin receptor, functions as a signaling scaffold that propagates insulin action through binding to SH2 domain-containing proteins including the p85 regulatory subunit of PI3K, NCK1, NCK2, GRB2 or SHP2. Recruitment of GRB2 leads to the activation of the guanine nucleotide exchange factor SOS1 which in turn triggers the Ras/Raf/MEK/MAPK signaling cascade. Activation of the PI3K/AKT pathway is responsible for most of insulin metabolic effects in the cell, and the Ras/Raf/MEK/MAPK is involved in the regulation of gene expression and in cooperation with the PI3K pathway regulates cell growth and differentiation. Acts a positive regulator of the Wnt/beta-catenin signaling pathway through suppression of DVL2 autophagy-mediated degradation leading to cell proliferation. The chain is Insulin receptor substrate 1 (IRS1) from Homo sapiens (Human).